The sequence spans 446 residues: tRNA-2-methylthio-N(6)-dimethylallyladenosine synthase (446 aa).

In terms of domain architecture, MTTase N-terminal spans 3-120; that stretch reads KKIYIKTFGC…LPEMLKQRRS (118 aa). C12, C49, C83, C157, C161, and C164 together coordinate [4Fe-4S] cluster. Residues 143–375 enclose the Radical SAM core domain; sequence KVEGATAFVS…QAVIDQNTRR (233 aa). Residues 378 to 444 form the TRAM domain; sequence DEMVGTVQRI…AYTLRGEIIV (67 aa).

It belongs to the methylthiotransferase family. MiaB subfamily. In terms of assembly, monomer. Requires [4Fe-4S] cluster as cofactor.

It localises to the cytoplasm. The enzyme catalyses N(6)-dimethylallyladenosine(37) in tRNA + (sulfur carrier)-SH + AH2 + 2 S-adenosyl-L-methionine = 2-methylsulfanyl-N(6)-dimethylallyladenosine(37) in tRNA + (sulfur carrier)-H + 5'-deoxyadenosine + L-methionine + A + S-adenosyl-L-homocysteine + 2 H(+). Its function is as follows. Catalyzes the methylthiolation of N6-(dimethylallyl)adenosine (i(6)A), leading to the formation of 2-methylthio-N6-(dimethylallyl)adenosine (ms(2)i(6)A) at position 37 in tRNAs that read codons beginning with uridine. The sequence is that of tRNA-2-methylthio-N(6)-dimethylallyladenosine synthase from Janthinobacterium sp. (strain Marseille) (Minibacterium massiliensis).